We begin with the raw amino-acid sequence, 291 residues long: Methylsterol monooxygenase 1-3 (291 aa).

The next 3 membrane-spanning stretches (helical) occupy residues 41 to 61 (TILV…IVEW), 92 to 112 (FLLV…MVGI), and 114 to 134 (SGLP…YFLI). One can recognise a Fatty acid hydroxylase domain in the interval 128–263 (LVVYFLIEDY…FTYCDYIYGT (136 aa)). Residues 143–147 (HRWMH) carry the Histidine box-1 motif. A Histidine box-2 motif is present at residues 156 to 160 (HRIHH). A helical transmembrane segment spans residues 178 to 198 (ILILGIPTFLGPAIAPGHIMT). The Histidine box-3 motif lies at 235 to 241 (YHDYHHY).

The protein belongs to the sterol desaturase family. In terms of assembly, interacts with ACBP1. Requires Fe cation as cofactor. In terms of tissue distribution, expressed at low levels in leaves, roots, siliques and flowers.

The protein localises to the endoplasmic reticulum membrane. It carries out the reaction 4,4-dimethyl-5alpha-cholest-7-en-3beta-ol + 6 Fe(II)-[cytochrome b5] + 3 O2 + 5 H(+) = 4alpha-carboxy-4beta-methyl-5alpha-cholest-7-ene-3beta-ol + 6 Fe(III)-[cytochrome b5] + 4 H2O. The catalysed reaction is 24-methylidenelophenol + 6 Fe(II)-[cytochrome b5] + 3 O2 + 5 H(+) = 4alpha-carboxy-ergosta-7,24(24(1))-dien-3beta-ol + 6 Fe(III)-[cytochrome b5] + 4 H2O. In terms of biological role, non-heme iron oxygenase involved in sterols biosynthesis by catalyzing the removal of the first methyl group at the C-4 position. 4,4-dimethyl-9-beta,19-cyclopropylsterols such as 24-methylenecycloartanol are the preferred substrates. The polypeptide is Methylsterol monooxygenase 1-3 (Arabidopsis thaliana (Mouse-ear cress)).